We begin with the raw amino-acid sequence, 218 residues long: Probable WRKY transcription factor 12 (218 aa).

The segment covering Ser-49–Ser-63 has biased composition (low complexity). Disordered regions lie at residues Ser-49 to Asn-120 and His-199 to Phe-218. Residues Thr-64–Leu-77 show a composition bias toward polar residues. The segment covering Ser-105 to Gly-116 has biased composition (low complexity). The WRKY DNA-binding region spans Ser-139–Ser-204.

It belongs to the WRKY group II-c family.

It localises to the nucleus. Its function is as follows. Transcription factor. Interacts specifically with the W box (5'-(T)TGAC[CT]-3'), a frequently occurring elicitor-responsive cis-acting element. The polypeptide is Probable WRKY transcription factor 12 (WRKY12) (Arabidopsis thaliana (Mouse-ear cress)).